We begin with the raw amino-acid sequence, 272 residues long: Bis(5'-nucleosyl)-tetraphosphatase, symmetrical (272 aa).

The protein belongs to the Ap4A hydrolase family.

The enzyme catalyses P(1),P(4)-bis(5'-adenosyl) tetraphosphate + H2O = 2 ADP + 2 H(+). Functionally, hydrolyzes diadenosine 5',5'''-P1,P4-tetraphosphate to yield ADP. This Ectopseudomonas mendocina (strain ymp) (Pseudomonas mendocina) protein is Bis(5'-nucleosyl)-tetraphosphatase, symmetrical.